A 633-amino-acid chain; its full sequence is Extracellular metalloproteinase 3 (633 aa).

A signal peptide spans 1–18 (MHGLLLAGLLALPMNVLA). A propeptide spanning residues 19-246 (HPAEQHASNV…VHNVVDYVAS (228 aa)) is cleaved from the precursor. An N-linked (GlcNAc...) asparagine glycan is attached at N410. H429 is a binding site for Zn(2+). The active site involves E430. Residue H433 participates in Zn(2+) binding. N-linked (GlcNAc...) asparagine glycans are attached at residues N480 and N622.

It belongs to the peptidase M36 family. Requires Zn(2+) as cofactor.

Its subcellular location is the secreted. Functionally, secreted metalloproteinase probably acting as a virulence factor. The protein is Extracellular metalloproteinase 3 (MEP3) of Trichophyton equinum (Horse ringworm fungus).